Here is a 700-residue protein sequence, read N- to C-terminus: Probable pre-mRNA-splicing factor ATP-dependent RNA helicase DEAH4 (700 aa).

Ala-2 is modified (N-acetylalanine). One can recognise a Helicase ATP-binding domain in the interval 14-178 (VETVEKNSVV…FSGCPVLNVP (165 aa)). Position 27–34 (27–34 (GETGSGKS)) interacts with ATP. Residues 124-127 (DEAH) carry the DEAH box motif. In terms of domain architecture, Helicase C-terminal spans 200-377 (SLKVAIDIHV…GSVLYLKSLD (178 aa)). Disordered stretches follow at residues 463–486 (PARS…NGSG) and 654–682 (GPAP…SENV).

This sequence belongs to the DEAD box helicase family. DEAH subfamily. PRP22 sub-subfamily.

The enzyme catalyses ATP + H2O = ADP + phosphate + H(+). Functionally, may be involved in pre-mRNA splicing. The chain is Probable pre-mRNA-splicing factor ATP-dependent RNA helicase DEAH4 from Arabidopsis thaliana (Mouse-ear cress).